Here is a 363-residue protein sequence, read N- to C-terminus: tRNA/tmRNA (uracil-C(5))-methyltransferase (363 aa).

5 residues coordinate S-adenosyl-L-methionine: Gln187, Tyr215, Asn220, Glu236, and Asp296. Cys321 acts as the Nucleophile in catalysis. The Proton acceptor role is filled by Glu355.

The protein belongs to the class I-like SAM-binding methyltransferase superfamily. RNA M5U methyltransferase family. TrmA subfamily.

The enzyme catalyses uridine(54) in tRNA + S-adenosyl-L-methionine = 5-methyluridine(54) in tRNA + S-adenosyl-L-homocysteine + H(+). It carries out the reaction uridine(341) in tmRNA + S-adenosyl-L-methionine = 5-methyluridine(341) in tmRNA + S-adenosyl-L-homocysteine + H(+). In terms of biological role, dual-specificity methyltransferase that catalyzes the formation of 5-methyluridine at position 54 (m5U54) in all tRNAs, and that of position 341 (m5U341) in tmRNA (transfer-mRNA). The sequence is that of tRNA/tmRNA (uracil-C(5))-methyltransferase from Pseudomonas aeruginosa (strain LESB58).